The chain runs to 744 residues: Scytalone dehydratase-like protein Arp1 (744 aa).

Tyrosine 621 contacts substrate. Catalysis depends on residues histidine 656 and histidine 681. A substrate-binding site is contributed by asparagine 702.

The protein belongs to the scytalone dehydratase family. In terms of assembly, homotrimer. Each subunit contains an active site, located in the central part of the hydrophobic core of the monomer, which functions independently.

Functionally, scytalone dehydratase-like protein; part of the Pks2 gene cluster that mediates the formation of infectious structures (appressoria), enabling these fungi to kill insects faster. The product of the Pks2 gene cluster is different from the one of Pks1 and has still not been identified. This is Scytalone dehydratase-like protein Arp1 from Metarhizium brunneum (strain ARSEF 3297).